A 70-amino-acid polypeptide reads, in one-letter code: Exodeoxyribonuclease 7 small subunit (70 aa).

It belongs to the XseB family. Heterooligomer composed of large and small subunits.

It is found in the cytoplasm. It catalyses the reaction Exonucleolytic cleavage in either 5'- to 3'- or 3'- to 5'-direction to yield nucleoside 5'-phosphates.. Bidirectionally degrades single-stranded DNA into large acid-insoluble oligonucleotides, which are then degraded further into small acid-soluble oligonucleotides. The sequence is that of Exodeoxyribonuclease 7 small subunit from Streptococcus sanguinis (strain SK36).